The sequence spans 1877 residues: Transmembrane protein 131 (1877 aa).

The first 20 residues, 1–20, serve as a signal peptide directing secretion; it reads MGKRAGGAAAAAAAASTSSA. The Lumenal segment spans residues 21 to 1115; sequence AGLEPAAGRG…AEALPRPNWE (1095 aa). Positions 107–281 are papD-L domain; the sequence is RFEPPMLDFH…ETKGVMRASF (175 aa). Residues 1116-1136 form a helical membrane-spanning segment; it reads LALYIIISGVMSALFLLVIGT. Residues 1137-1877 lie on the Cytoplasmic side of the membrane; that stretch reads AYLEAQGIWE…WSNSHFPHEN (741 aa). Over residues 1197–1227 the composition is skewed to polar residues; it reads NASSRPGTGSHRQCGTSVHPHSSHGSKNSAD. 4 disordered regions span residues 1197 to 1573, 1590 to 1655, 1679 to 1707, and 1830 to 1852; these read NASS…SSST, LKQR…NPTF, SDFSSSLGISHIPVDSDGSDSSGLWSPVS, and NSAAAHTPSASGPADDLGQTYNP. Over residues 1233–1258 the composition is skewed to low complexity; the sequence is TRNSSSMSSRTSPQAAASQSTSKTSP. Over residues 1301 to 1311 the composition is skewed to pro residues; the sequence is QPPPPVPQHQE. A phosphoserine mark is found at Ser1318 and Ser1338. Basic and acidic residues-rich tracts occupy residues 1326–1339 and 1349–1360; these read SHPERASTTRHSSE and AMDKDFDHHDSS. Ser1371 carries the phosphoserine modification. Positions 1376–1391 are enriched in basic residues; the sequence is SKGKGKSLQQRKAKPP. A compositionally biased stretch (basic and acidic residues) spans 1392–1414; the sequence is KKQEEKEKRGKGKPQEDELKDAL. A compositionally biased stretch (low complexity) spans 1420–1432; the sequence is SSTTTETSNPDTE. Polar residues-rich tracts occupy residues 1507–1523 and 1538–1550; these read TLASGSKSRNPPKTKGT and LPSSQELGNTSSS. The segment covering 1599 to 1608 has biased composition (pro residues); that stretch reads PASPSLPTAP. A compositionally biased stretch (low complexity) spans 1609 to 1646; that stretch reads CPFTSRGSYSSVVNSSGSDTKAKQTSSSKSKLTKAASL. Over residues 1830–1839 the composition is skewed to polar residues; sequence NSAAAHTPSA. A phosphoserine mark is found at Ser1857 and Ser1865.

The protein belongs to the TMEM131 family. Interacts (via PapD-L domain) with COL1A2 (via C-terminus); the interaction is direct, may occur with other collagen proteins, and is involved in assembly and TRAPPIII ER-to-Golgi transport complex-dependent secretion of collagen. Interacts (via C-terminus) with TRAPPC8 (via C-terminus); the interaction is direct.

It is found in the membrane. Its function is as follows. Collagen binding transmembrane protein involved in collagen secretion by recruiting the ER-to-Golgi transport complex TRAPPIII. May play a role in the immune response to viral infection. This is Transmembrane protein 131 from Mus musculus (Mouse).